A 77-amino-acid chain; its full sequence is Apelin (77 aa).

An N-terminal signal peptide occupies residues 1–22 (MNLRLCVQALLLLWLSLTAVCG). The propeptide occupies 23–41 (GSLMPLPDGNGLEDGNVRH). The disordered stretch occupies residues 43–77 (VQPRGSRNGPGPWQGGRRKFRRQRPRLSHKGPMPF). Over residues 58–71 (GRRKFRRQRPRLSH) the composition is skewed to basic residues.

This sequence belongs to the apelin family. Post-translationally, several active peptides may be produced by proteolytic processing of the peptide precursor. Expressed in the brain with highest levels in the frontal cortex, thalamus, hypothalamus and midbrain. Secreted by the mammary gland into the colostrum and the milk.

It localises to the secreted. Its subcellular location is the extracellular space. In terms of biological role, peptide hormone that functions as endogenous ligand for the G-protein-coupled apelin receptor (APLNR/APJ), that plays a role in cadiovascular homeostasis. Functions as a balanced agonist activating both G(i) protein pathway and beta-arrestin pathway of APLNR. Downstream G proteins activation, apelin can inhibit cAMP production and activate key intracellular effectors such as ERKs. On the other hand, APLNR activation induces beta-arrestin recruitment to the membrane leading to desensitization and internalization of the receptor. Apelin blunts cardiac hypertrophic induction from APLNR on response to pathological stimuli, but also induces myocardial hypertrophy under normal conditions. Apelin-36 dissociates more hardly than (pyroglu)apelin-13 from APLNR. Involved in the regulation of cardiac precursor cell movements during gastrulation and heart morphogenesis. Has an inhibitory effect on cytokine production in response to T-cell receptor/CD3 cross-linking; the oral intake of apelin in the colostrum and the milk might therefore modulate immune responses in neonates. Plays a role in early coronary blood vessels formation. Mediates myocardial contractility in an ERK1/2-dependent manner. May also have a role in the central control of body fluid homeostasis by influencing vasopressin release and drinking behavior. (Microbial infection) Endogenous ligand for the apelin receptor (APLNR), an alternative coreceptor with CD4 for HIV-1 infection. Inhibits HIV-1 entry in cells coexpressing CD4 and APLNR. Apelin-36 has a greater inhibitory activity on HIV infection than other synthetic apelin derivatives. In Homo sapiens (Human), this protein is Apelin.